The chain runs to 146 residues: Large ribosomal subunit protein uL15 (146 aa).

Over residues 1–18 (MKLHELKAAEGTRKERNR) the composition is skewed to basic and acidic residues. The segment at 1 to 58 (MKLHELKAAEGTRKERNRVGRGMSSGNGKTSGRGHKGQKARSGGGVRPGFEGGQMPLF) is disordered. The segment covering 42 to 52 (SGGGVRPGFEG) has biased composition (gly residues).

Belongs to the universal ribosomal protein uL15 family. Part of the 50S ribosomal subunit.

Binds to the 23S rRNA. This is Large ribosomal subunit protein uL15 from Oceanobacillus iheyensis (strain DSM 14371 / CIP 107618 / JCM 11309 / KCTC 3954 / HTE831).